Reading from the N-terminus, the 158-residue chain is C-type lectin mannose-binding isoform (158 aa).

Residues 1–23 (MGRFLLVTLSLLVGAFSLNEANS) form the signal peptide. 4 disulfide bridges follow: Cys26–Cys37, Cys54–Cys154, Cys61–Cys156, and Cys129–Cys146. The C-type lectin domain maps to 33–155 (KNGFCYKVFN…CKALYSFICQ (123 aa)). Residues 119–121 (EPN) carry the Mannose-binding motif. N-linked (GlcNAc...) asparagine glycosylation occurs at Asn121. Positions 127, 142, and 143 each coordinate Ca(2+).

It belongs to the true venom lectin family. In terms of assembly, dimer. Probably disulfide-linked homodimer. In terms of tissue distribution, expressed by the venom gland.

The protein localises to the secreted. Mannose-binding lectin that binds to and agglutinates rabbit (but not human) erythrocytes in a calcium-dependent manner. The sequence is that of C-type lectin mannose-binding isoform from Oxyuranus scutellatus (Coastal taipan).